The primary structure comprises 187 residues: Elongation factor P (187 aa).

It belongs to the elongation factor P family.

Its subcellular location is the cytoplasm. The protein operates within protein biosynthesis; polypeptide chain elongation. Functionally, involved in peptide bond synthesis. Stimulates efficient translation and peptide-bond synthesis on native or reconstituted 70S ribosomes in vitro. Probably functions indirectly by altering the affinity of the ribosome for aminoacyl-tRNA, thus increasing their reactivity as acceptors for peptidyl transferase. This chain is Elongation factor P, found in Sphingopyxis alaskensis (strain DSM 13593 / LMG 18877 / RB2256) (Sphingomonas alaskensis).